The sequence spans 216 residues: uncharacterized protein (216 aa).

It belongs to the channel forming colicin family.

This is an uncharacterized protein from Escherichia coli.